Here is a 286-residue protein sequence, read N- to C-terminus: ATP synthase gamma chain (286 aa).

The protein belongs to the ATPase gamma chain family. F-type ATPases have 2 components, CF(1) - the catalytic core - and CF(0) - the membrane proton channel. CF(1) has five subunits: alpha(3), beta(3), gamma(1), delta(1), epsilon(1). CF(0) has three main subunits: a, b and c.

Its subcellular location is the cell membrane. In terms of biological role, produces ATP from ADP in the presence of a proton gradient across the membrane. The gamma chain is believed to be important in regulating ATPase activity and the flow of protons through the CF(0) complex. In Ureaplasma parvum serovar 3 (strain ATCC 27815 / 27 / NCTC 11736), this protein is ATP synthase gamma chain.